Consider the following 429-residue polypeptide: Adenylosuccinate synthetase (429 aa).

Residues 13–19 (GDEGKGK) and 41–43 (GHT) contribute to the GTP site. Asp14 acts as the Proton acceptor in catalysis. Residues Asp14 and Gly41 each contribute to the Mg(2+) site. Residues 14–17 (DEGK), 39–42 (NAGH), Thr130, Arg144, Gln224, Thr239, and Arg303 each bind IMP. Catalysis depends on His42, which acts as the Proton donor. Residue 299 to 305 (ATTGRAR) participates in substrate binding. Residues Arg305, 331-333 (KLD), and 412-414 (STG) each bind GTP.

Belongs to the adenylosuccinate synthetase family. In terms of assembly, homodimer. Mg(2+) serves as cofactor.

It is found in the cytoplasm. It catalyses the reaction IMP + L-aspartate + GTP = N(6)-(1,2-dicarboxyethyl)-AMP + GDP + phosphate + 2 H(+). The protein operates within purine metabolism; AMP biosynthesis via de novo pathway; AMP from IMP: step 1/2. Functionally, plays an important role in the de novo pathway of purine nucleotide biosynthesis. Catalyzes the first committed step in the biosynthesis of AMP from IMP. The sequence is that of Adenylosuccinate synthetase from Psychrobacter sp. (strain PRwf-1).